A 357-amino-acid chain; its full sequence is Prostaglandin D2 receptor-like (357 aa).

Residues 1 to 20 (MNESYRCQAATWVERGSSAT) lie on the Extracellular side of the membrane. Asparagine 2 carries an N-linked (GlcNAc...) asparagine glycan. A helical membrane pass occupies residues 21-41 (MGGVLFSAGLLGNLLALVLLA). Over 42–57 (RSGLGSCRPGPLHPPP) the chain is Cytoplasmic. A helical membrane pass occupies residues 58–78 (SVFYVLVCGLTVTHLLGKCLI). Over 79–106 (SPMVLAAYAQNRSLKELLPASGNQLCEA) the chain is Extracellular. Asparagine 89 is a glycosylation site (N-linked (GlcNAc...) asparagine). Residues cysteine 104 and cysteine 182 are joined by a disulfide bond. A helical transmembrane segment spans residues 107–127 (FAFLMSFFGLASTLQLLAMAL). At 128–149 (ECWLSLGHPFFYQRHITARRGV) the chain is on the cytoplasmic side. Residues 150 to 170 (LVAPVAGAFSLAFCALPFAGF) form a helical membrane-spanning segment. The Extracellular portion of the chain corresponds to 171–194 (GKFVQYCPGTWCFIQMIHKKRSFS). A helical transmembrane segment spans residues 195 to 215 (VIGFSVLYSSLMALLVLATVV). Topologically, residues 216–261 (CNLGAMSNLYAMHRRQRHHPRRCSRDRAQSGSDYRHGSPNPLEELD) are cytoplasmic. Residues 262–282 (HFVLLALTTVLFTMCSLPLIY) form a helical membrane-spanning segment. The Extracellular portion of the chain corresponds to 283–306 (RAYYGAFKLVDRADGDSEDLQALR). A helical transmembrane segment spans residues 307-327 (FLSVISIVDPWIFIIFRTSVF). Over 328–357 (RMLFHKAFTRPLIYRNWCSHSWQTNMESTL) the chain is Cytoplasmic.

It belongs to the G-protein coupled receptor 1 family. As to expression, strongly expressed in eye and gastrointestinal tract (GIT), moderately in the brain and oviduct and weakly in the epididymis. In the eye, expressed in the epithelium of the iris and ciliary body and in photoreceptor cells of the retina. In the brain, expressed in leptomeninges, choroid plexus and spinal cord (sensory and motor neurons of the dorsal and ventral horns). In the stomach, expressed in the mucous-secreting goblet cells and the columnar epithelium. Expressed in platelets.

Its subcellular location is the cell membrane. Receptor for prostaglandin D2 (PGD2). The activity of this receptor is mainly mediated by G(s) proteins that stimulate adenylate cyclase, resulting in an elevation of intracellular cAMP. A mobilization of calcium is also observed, but without formation of inositol 1,4,5-trisphosphate. This Rattus norvegicus (Rat) protein is Prostaglandin D2 receptor-like (Ptgdrl).